The chain runs to 132 residues: Large-conductance mechanosensitive channel (132 aa).

2 consecutive transmembrane segments (helical) span residues 14-34 (VIDLAVGVVIGAAFGKIVSSL) and 67-87 (GNFIQTIFDFLIIAAAIFMFV).

Belongs to the MscL family. Homopentamer.

The protein localises to the cell membrane. Its function is as follows. Channel that opens in response to stretch forces in the membrane lipid bilayer. May participate in the regulation of osmotic pressure changes within the cell. The protein is Large-conductance mechanosensitive channel of Bacillus anthracis (strain A0248).